Consider the following 394-residue polypeptide: Obg-like ATPase 1 (394 aa).

The 258-residue stretch at 25-282 folds into the OBG-type G domain; sequence LKIGIVGLPN…MPPDEAAKYC (258 aa). ATP-binding positions include 34–39, 56–60, and 94–97; these read NVGKST, FCTID, and DIAG. Residue 34-39 coordinates GTP; sequence NVGKST. S38 and T58 together coordinate Mg(2+). 2 residues coordinate GTP: F129 and N230. ATP is bound by residues 230 to 231, M231, and 263 to 265; these read NM and SCA. Position 263–265 (263–265) interacts with GTP; it reads SCA. The 84-residue stretch at 303–386 folds into the TGS domain; that stretch reads HLIYFFTAGP…QDGDIIFFKF (84 aa).

The protein belongs to the TRAFAC class OBG-HflX-like GTPase superfamily. OBG GTPase family. YchF/OLA1 subfamily. Monomer (Potential). Interacts with GAP1. It depends on Mg(2+) as a cofactor.

The protein resides in the cell membrane. It localises to the cytoplasm. Its subcellular location is the cytosol. With respect to regulation, activated by GAP1. In terms of biological role, hydrolyzes ATP, and can also hydrolyze GTP with lower efficiency. Has lower affinity for GTP (Potential). Exhibits GTPase activity. Exhibits similar binding affinities and hydrolytic activities toward both GTP and ATP. Binds to the 26 S ribosomal RNA in vitro, but not to the 5.8 S or 18 S rRNA. Confers sensitivity to salinity stress by suppressing the anti-oxidation enzymatic activities and increasing lipid peroxidation thus leading to the accumulation of reactive oxygen species (ROS). This chain is Obg-like ATPase 1, found in Oryza sativa subsp. japonica (Rice).